The following is a 165-amino-acid chain: Short form salivary protein D7R1 (165 aa).

A signal peptide spans 1 to 21 (MFNKLHLVSLLACGLFVIAQA). 3 cysteine pairs are disulfide-bonded: Cys27/Cys59, Cys40/Cys164, and Cys98/Cys117. The serotonin site is built by Glu28, His56, Tyr115, Asp132, and Glu135. Positions 115, 132, and 135 each coordinate histamine.

This sequence belongs to the PBP/GOBP family. As to expression, female salivary gland. Not detected in female carcass without salivary glands. Not detected in male tissues.

The protein resides in the secreted. Modulates blood feeding of female mosquitoes on vertebrate species by binding and sequestering different mediators involved in the host response. Binds serotonin and histamine. Increases blood clotting time. The chain is Short form salivary protein D7R1 from Anopheles gambiae (African malaria mosquito).